Here is a 519-residue protein sequence, read N- to C-terminus: Probable pectinesterase/pectinesterase inhibitor 36 (519 aa).

The signal sequence occupies residues 1 to 25 (MSTFVKVTDLITIMFFLAIAAVITA). The segment at 27 to 141 (NTAELDVLEM…TFVLHEALAF (115 aa)) is pectinesterase inhibitor 36. Asn92 and Asn130 each carry an N-linked (GlcNAc...) asparagine glycan. A disordered region spans residues 147–196 (GHMKKRLHGPARQGHGPTRPKHRPTRPNHGPGRSHHGPSRPNQNGGMLVS). Over residues 164–184 (TRPKHRPTRPNHGPGRSHHGP) the composition is skewed to basic residues. The segment covering 186-196 (RPNQNGGMLVS) has biased composition (polar residues). Residues 205–505 (DFVVARDGSA…FTVSRFIQGD (301 aa)) are pectinesterase 36. Substrate contacts are provided by Thr283 and Gln313. Asp336 (proton donor; for pectinesterase activity) is an active-site residue. The active-site Nucleophile; for pectinesterase activity is Asp357. Arg425 and Trp427 together coordinate substrate.

In the N-terminal section; belongs to the PMEI family. It in the C-terminal section; belongs to the pectinesterase family. Expressed in siliques.

Its subcellular location is the secreted. It localises to the cell wall. The enzyme catalyses [(1-&gt;4)-alpha-D-galacturonosyl methyl ester](n) + n H2O = [(1-&gt;4)-alpha-D-galacturonosyl](n) + n methanol + n H(+). Its pathway is glycan metabolism; pectin degradation; 2-dehydro-3-deoxy-D-gluconate from pectin: step 1/5. In terms of biological role, acts in the modification of cell walls via demethylesterification of cell wall pectin. In Arabidopsis thaliana (Mouse-ear cress), this protein is Probable pectinesterase/pectinesterase inhibitor 36 (PME36).